The chain runs to 300 residues: 7-methylguanosine phosphate-specific 5'-nucleotidase (300 aa).

The Nucleophile role is filled by Asp-41. Residues Asp-41 and Asp-43 each coordinate Mg(2+). Catalysis depends on Asp-43, which acts as the Proton donor. Glu-88 serves as a coordination point for CMP. Residue Glu-88 coordinates N(7)-methyl-GMP. Substrate contacts are provided by residues 156 to 157 (SA) and Lys-205. Asp-230 lines the Mg(2+) pocket. Lys-256 is subject to N6-acetyllysine.

It belongs to the pyrimidine 5'-nucleotidase family. Monomer.

It is found in the cytoplasm. It catalyses the reaction N(7)-methyl-GMP + H2O = N(7)-methylguanosine + phosphate. It carries out the reaction CMP + H2O = cytidine + phosphate. The enzyme catalyses a ribonucleoside 5'-phosphate + H2O = a ribonucleoside + phosphate. In terms of biological role, specifically hydrolyzes 7-methylguanosine monophosphate (m(7)GMP) to 7-methylguanosine and inorganic phosphate. The specific activity for m(7)GMP may protect cells against undesired salvage of m(7)GMP and its incorporation into nucleic acids. Also has weak activity for CMP. UMP and purine nucleotides are poor substrates. This Mus musculus (Mouse) protein is 7-methylguanosine phosphate-specific 5'-nucleotidase (Nt5c3b).